The chain runs to 397 residues: Phosphoglycerate kinase (397 aa).

Residues Asp25–Asn27, Arg41, His64–Arg67, Arg118, and Arg151 each bind substrate. Residues Lys202, Glu324, and Gly350–Thr353 contribute to the ATP site.

Belongs to the phosphoglycerate kinase family. In terms of assembly, monomer.

It localises to the cytoplasm. The catalysed reaction is (2R)-3-phosphoglycerate + ATP = (2R)-3-phospho-glyceroyl phosphate + ADP. Its pathway is carbohydrate degradation; glycolysis; pyruvate from D-glyceraldehyde 3-phosphate: step 2/5. This is Phosphoglycerate kinase from Albidiferax ferrireducens (strain ATCC BAA-621 / DSM 15236 / T118) (Rhodoferax ferrireducens).